Consider the following 796-residue polypeptide: ATP-dependent DNA helicase PIF6 (796 aa).

The tract at residues 197 to 230 (RPTGLPSAHSGGKLPKHMGGDELNPQLEGSTTPG) is disordered. Residue 255 to 262 (GSAGTGKT) participates in ATP binding. Residues 636–655 (QAYVALSRVRSREDLMLTAF) mediate DNA binding. Disordered stretches follow at residues 692-719 (KGKTRAKHPRSQGEKNSVDEGGNAPEEH) and 762-796 (TSSAIPNFTQESNNGDANSQLQHPFSQNNLMVDDD).

The protein belongs to the helicase family. PIF1 subfamily. Monomer. The cofactor is Mg(2+).

The protein localises to the nucleus. The catalysed reaction is Couples ATP hydrolysis with the unwinding of duplex DNA at the replication fork by translocating in the 5'-3' direction. This creates two antiparallel DNA single strands (ssDNA). The leading ssDNA polymer is the template for DNA polymerase III holoenzyme which synthesizes a continuous strand.. It carries out the reaction ATP + H2O = ADP + phosphate + H(+). In terms of biological role, DNA-dependent ATPase and 5'-3' DNA helicase required for the maintenance of genome stability. The polypeptide is ATP-dependent DNA helicase PIF6 (Trypanosoma brucei brucei (strain 927/4 GUTat10.1)).